The sequence spans 157 residues: Tripartite terminase subunit 2 (157 aa).

Positions 1–69 (MSWAKQRVPF…DGEDGHALPD (69 aa)) are disordered. The span at 11–27 (LDDDDGEEENDVQDDVD) shows a compositional bias: acidic residues.

The protein belongs to the herpesviridae TRM2 protein family. In terms of assembly, associates with TRM1 and TRM3 to form the tripartite terminase complex.

It localises to the host nucleus. Component of the molecular motor that translocates viral genomic DNA in empty capsid during DNA packaging. Forms a tripartite terminase complex together with TRM1 and TRM3 in the host cytoplasm. Once the complex reaches the host nucleus, it interacts with the capsid portal vertex. This portal forms a ring in which genomic DNA is translocated into the capsid. In Homo sapiens (Human), this protein is Tripartite terminase subunit 2.